A 316-amino-acid polypeptide reads, in one-letter code: Apolipoprotein E (316 aa).

An N-terminal signal peptide occupies residues 1–18; it reads MKVLWAALVVTLLAGCGA. A run of 8 repeats spans residues 83 to 104, 105 to 126, 127 to 148, 149 to 170, 171 to 192, 193 to 214, 215 to 232, and 233 to 254. The 8 X 22 AA approximate tandem repeats stretch occupies residues 83–254; the sequence is ALMDDTMKEV…RLDEVREQVQ (172 aa). The tract at residues 161-171 is LDL and other lipoprotein receptors binding; it reads HLRKLRKRLLR. 165–168 serves as a coordination point for heparin; sequence LRKR. The segment at 213–289 is lipid-binding and lipoprotein association; the sequence is HTLVSKPLQE…SWFEPLVQDM (77 aa). 228–235 serves as a coordination point for heparin; the sequence is AQRLRGRL. The interval 265 to 316 is homooligomerization; that stretch reads NQVRLQAEAFQGRLKSWFEPLVQDMQQKWAELVEKVQLAVGAVPTSVPSEKQ. A specificity for association with VLDL region spans residues 277-289; that stretch reads RLKSWFEPLVQDM.

Belongs to the apolipoprotein A1/A4/E family. As to quaternary structure, homotetramer. May interact with ABCA1; functionally associated with ABCA1 in the biogenesis of HDLs. May interact with APP/A4 amyloid-beta peptide; the interaction is extremely stable in vitro but its physiological significance is unclear. May interact with MAPT. May interact with MAP2. In the cerebrospinal fluid, interacts with secreted SORL1. Interacts with PMEL; this allows the loading of PMEL luminal fragment on ILVs to induce fibril nucleation. Post-translationally, APOE exists as multiple glycosylated and sialylated glycoforms within cells and in plasma. The extent of glycosylation and sialylation are tissue and context specific. Glycated in plasma VLDL. In terms of processing, phosphorylated by FAM20C in the extracellular medium.

It localises to the secreted. The protein localises to the extracellular space. Its subcellular location is the extracellular matrix. The protein resides in the extracellular vesicle. It is found in the endosome. It localises to the multivesicular body. In terms of biological role, APOE is an apolipoprotein, a protein associating with lipid particles, that mainly functions in lipoprotein-mediated lipid transport between organs via the plasma and interstitial fluids. APOE is a core component of plasma lipoproteins and is involved in their production, conversion and clearance. Apolipoproteins are amphipathic molecules that interact both with lipids of the lipoprotein particle core and the aqueous environment of the plasma. As such, APOE associates with chylomicrons, chylomicron remnants, very low density lipoproteins (VLDL) and intermediate density lipoproteins (IDL) but shows a preferential binding to high-density lipoproteins (HDL). It also binds a wide range of cellular receptors including the LDL receptor/LDLR and the very low-density lipoprotein receptor/VLDLR that mediate the cellular uptake of the APOE-containing lipoprotein particles. Finally, APOE also has a heparin-binding activity and binds heparan-sulfate proteoglycans on the surface of cells, a property that supports the capture and the receptor-mediated uptake of APOE-containing lipoproteins by cells. This is Apolipoprotein E (APOE) from Diceros bicornis (Black rhinoceros).